Consider the following 610-residue polypeptide: UvrABC system protein C (610 aa).

The region spanning 16 to 94 (SQPGVYRMYD…IKLYQPRYNV (79 aa)) is the GIY-YIG domain. Residues 204–239 (QQVLNQLISRMESASRDLRFEDAARIRDQIQAVRRV) enclose the UVR domain.

The protein belongs to the UvrC family. As to quaternary structure, interacts with UvrB in an incision complex.

It localises to the cytoplasm. The UvrABC repair system catalyzes the recognition and processing of DNA lesions. UvrC both incises the 5' and 3' sides of the lesion. The N-terminal half is responsible for the 3' incision and the C-terminal half is responsible for the 5' incision. This is UvrABC system protein C from Pectobacterium atrosepticum (strain SCRI 1043 / ATCC BAA-672) (Erwinia carotovora subsp. atroseptica).